Consider the following 232-residue polypeptide: Izumo sperm-egg fusion protein 4 (232 aa).

The N-terminal stretch at 1–15 (MALLLCLVCLTAALA) is a signal peptide. Residues N24 and N219 are each glycosylated (N-linked (GlcNAc...) asparagine).

The protein belongs to the Izumo family. As to expression, detected in sperm.

It is found in the secreted. This Homo sapiens (Human) protein is Izumo sperm-egg fusion protein 4 (IZUMO4).